A 601-amino-acid polypeptide reads, in one-letter code: Deuterosome assembly protein 1 (601 aa).

Coiled-coil stretches lie at residues 14-59 (CEAE…NAQT), 86-197 (TQNY…KQQR), and 226-278 (IEKL…LQSR). Disordered stretches follow at residues 115–135 (MKQN…PFEL) and 188–213 (QTQL…CESS). Residues 121-131 (HRKEASNKDET) are compositionally biased toward basic and acidic residues. The tract at residues 307–326 (DNRKRVESSYSPSTKEPERK) is disordered. Residues 340–397 (HEKELNKMRSQLYQEEDLCSEQERMRNEISELTQELHQKEVTIATIMKKAALLERQLK) adopt a coiled-coil conformation. Serine 544 is modified (phosphoserine). Positions 555 to 586 (AAQHFLMEEEKRAKELEKLLNTHIDELQRHTE) form a coiled coil.

Belongs to the CEP63 family. Interacts with CEP152; the interaction is mutually exclusive with CEP63.

The protein resides in the cytoplasm. Key structural component of the deuterosome, a structure that promotes de novo centriole amplification in multiciliated cells. Deuterosome-mediated centriole amplification occurs in terminally differentiated multiciliated cells and can generate more than 100 centrioles. Probably sufficient for the specification and formation of the deuterosome inner core. Interacts with CEP152 and recruits PLK4 to activate centriole biogenesis. This Rattus norvegicus (Rat) protein is Deuterosome assembly protein 1.